The primary structure comprises 65 residues: Alpha-like toxin Bom4 (65 aa).

Positions Arg-2–His-64 constitute an LCN-type CS-alpha/beta domain. 4 cysteine pairs are disulfide-bonded: Cys-12/Cys-63, Cys-16/Cys-36, Cys-22/Cys-46, and Cys-26/Cys-48.

The protein belongs to the long (4 C-C) scorpion toxin superfamily. Sodium channel inhibitor family. Alpha subfamily. Expressed by the venom gland.

It localises to the secreted. Alpha toxins bind voltage-independently at site-3 of sodium channels (Nav) and inhibit the inactivation of the activated channels, thereby blocking neuronal transmission. This alpha-like toxin is highly toxic to mice and insects. The polypeptide is Alpha-like toxin Bom4 (Buthus occitanus mardochei (Moroccan scorpion)).